We begin with the raw amino-acid sequence, 359 residues long: Fructose-bisphosphate aldolase class 2 (359 aa).

A D-glyceraldehyde 3-phosphate-binding site is contributed by Ser-61. The Proton donor role is filled by Asp-110. His-111, Asp-145, Glu-175, and His-227 together coordinate Zn(2+). Gly-228 lines the dihydroxyacetone phosphate pocket. His-265 serves as a coordination point for Zn(2+). Dihydroxyacetone phosphate is bound by residues 266–268 (GGS) and 287–290 (NIDT).

It belongs to the class II fructose-bisphosphate aldolase family. Requires Zn(2+) as cofactor.

The enzyme catalyses beta-D-fructose 1,6-bisphosphate = D-glyceraldehyde 3-phosphate + dihydroxyacetone phosphate. It participates in carbohydrate degradation; glycolysis; D-glyceraldehyde 3-phosphate and glycerone phosphate from D-glucose: step 4/4. Functionally, catalyzes the aldol condensation of dihydroxyacetone phosphate (DHAP or glycerone-phosphate) with glyceraldehyde 3-phosphate (G3P) to form fructose 1,6-bisphosphate (FBP) in gluconeogenesis and the reverse reaction in glycolysis. This chain is Fructose-bisphosphate aldolase class 2 (fbaA), found in Buchnera aphidicola subsp. Schizaphis graminum (strain Sg).